A 393-amino-acid chain; its full sequence is Probable acetyl-CoA acyltransferase (393 aa).

The active-site Acyl-thioester intermediate is Cys88. Catalysis depends on proton acceptor residues His349 and Cys378.

The protein belongs to the thiolase-like superfamily. Thiolase family.

It is found in the cytoplasm. It catalyses the reaction 2 acetyl-CoA = acetoacetyl-CoA + CoA. The polypeptide is Probable acetyl-CoA acyltransferase (Staphylococcus aureus (strain MRSA252)).